The sequence spans 358 residues: Alanine racemase (358 aa).

The active-site Proton acceptor; specific for D-alanine is Lys34. Position 34 is an N6-(pyridoxal phosphate)lysine (Lys34). Arg129 provides a ligand contact to substrate. Residue Tyr254 is the Proton acceptor; specific for L-alanine of the active site. Met302 provides a ligand contact to substrate.

The protein belongs to the alanine racemase family. Requires pyridoxal 5'-phosphate as cofactor.

The catalysed reaction is L-alanine = D-alanine. It functions in the pathway amino-acid biosynthesis; D-alanine biosynthesis; D-alanine from L-alanine: step 1/1. In terms of biological role, catalyzes the interconversion of L-alanine and D-alanine. May also act on other amino acids. The sequence is that of Alanine racemase (alr) from Aliivibrio salmonicida (strain LFI1238) (Vibrio salmonicida (strain LFI1238)).